Consider the following 272-residue polypeptide: TIP41-like protein (272 aa).

Lys-106 is subject to N6-acetyllysine. Residues Arg-173–Glu-272 form an interaction with PPP2CA region. Ser-265 carries the phosphoserine modification.

The protein belongs to the TIP41 family. As to quaternary structure, isoform 1 interacts with PPP2CA. Isoform 2 does not interact with PPP2CA. Interacts with PPP2CB, PPP4C and PPP6C. Interacts with IGBP1; the interaction is dependent on PPP2CA. Associates with a protein phosphatase 2A PP2A(C):IGBP1 complex. Interacts with PPP4C and PPP4R2.

The protein localises to the cytoplasm. May be a allosteric regulator of serine/threonine-protein phosphatase 2A (PP2A). Isoform 1 inhibits catalytic activity of the PP2A(D) core complex in vitro. The PP2A(C):TIPRL complex does not show phosphatase activity. Acts as a negative regulator of serine/threonine-protein phosphatase 4 probably by inhibiting the formation of the active PPP4C:PPP4R2 complex; the function is proposed to implicate it in DNA damage response by promoting H2AX phosphorylated on Ser-140 (gamma-H2AX). May play a role in the regulation of ATM/ATR signaling pathway controlling DNA replication and repair. The sequence is that of TIP41-like protein (TIPRL) from Homo sapiens (Human).